A 510-amino-acid chain; its full sequence is Replication factor C large subunit (510 aa).

48–55 (GPPGTGKT) provides a ligand contact to ATP. Residues 459-510 (MESMLERKREESEVEEEAKEIEEAVEKAEEEEEREEKKKEGGGEQRTLDAFF) are disordered. A compositionally biased stretch (basic and acidic residues) spans 493 to 510 (EEKKKEGGGEQRTLDAFF).

Belongs to the activator 1 small subunits family. RfcL subfamily. In terms of assembly, heteromultimer composed of small subunits (RfcS) and large subunits (RfcL).

In terms of biological role, part of the RFC clamp loader complex which loads the PCNA sliding clamp onto DNA. This Methanopyrus kandleri (strain AV19 / DSM 6324 / JCM 9639 / NBRC 100938) protein is Replication factor C large subunit.